The sequence spans 374 residues: DNA-directed RNA polymerase subunit alpha (374 aa).

The tract at residues 1-257 is alpha N-terminal domain (alpha-NTD); it reads MSDNAHNLLY…KHFSIFENMD (257 aa). The interval 274–374 is alpha C-terminal domain (alpha-CTD); the sequence is KDDILHKLIL…EKIRAKNIKG (101 aa).

Belongs to the RNA polymerase alpha chain family. In terms of assembly, homodimer. The RNAP catalytic core consists of 2 alpha, 1 beta, 1 beta' and 1 omega subunit. When a sigma factor is associated with the core the holoenzyme is formed, which can initiate transcription.

The enzyme catalyses RNA(n) + a ribonucleoside 5'-triphosphate = RNA(n+1) + diphosphate. Functionally, DNA-dependent RNA polymerase catalyzes the transcription of DNA into RNA using the four ribonucleoside triphosphates as substrates. The protein is DNA-directed RNA polymerase subunit alpha of Chlamydia pneumoniae (Chlamydophila pneumoniae).